A 102-amino-acid chain; its full sequence is Large ribosomal subunit protein bL21 (102 aa).

The protein belongs to the bacterial ribosomal protein bL21 family. In terms of assembly, part of the 50S ribosomal subunit. Contacts protein L20.

This protein binds to 23S rRNA in the presence of protein L20. In Exiguobacterium sp. (strain ATCC BAA-1283 / AT1b), this protein is Large ribosomal subunit protein bL21.